The primary structure comprises 258 residues: Short-chain dehydrogenase/reductase FrzI (258 aa).

3 residues coordinate NADP(+): I21, N41, and N94. Active-site proton donor residues include S143 and S144. NADP(+)-binding residues include Y157, K161, V191, and T193. The active-site Proton acceptor is the Y157. K161 (lowers pKa of active site Tyr) is an active-site residue.

The protein belongs to the short-chain dehydrogenases/reductases (SDR) family.

It catalyses the reaction (1S,3S,6S,7S,8R)-7-hydroxy-6-[(4-methoxyphenyl)methyl]-3-(methylamino)-5-azatricyclo[6.3.1.0(1,5)]dodecan-9-one + NADPH + H(+) = (1S,3S,6S,7S,8S,9S)-6-[(4-methoxyphenyl)methyl]-3-(methylamino)-5-azatricyclo[6.3.1.0(1,5)]dodecane-7,9-diol + NADP(+). Its pathway is secondary metabolite biosynthesis. Its function is as follows. Short-chain dehydrogenase/reductase; part of the gene cluster that mediates the biosynthesis of the alkaloid (-)-FR901483, a potent immunosuppressant that shows efficacy in animal models and a probable inhibitor of purine nucleotide biosynthesis by targeting phosphoribosylpyrophosphate amidotransferase (PPAT). Within the pathway, FrzI catalyzes the formation of dephospho-(-)-FR901483 from the aza-tricyclic intermediate produced by FrzH. The biosynthesis of (-)-FR901483 starts with the condensation of two L-tyrosines to yield (S,S)-dityrosyl-piperazine. This process occurs in 3 steps with the non-canonical nonribosomal peptide synthetase FrzA catalyzing the reduction of L-tyrosine into L-tyrosinal, the spontaneous condensation of 2 L-tyrosinal units, and the subsequent reduction by the NmrA-like family domain-containing oxidoreductase FrzB. The cytochrome P450 monooxygenase FrzC then performs coupling between N10 and C1' to morph the piperazine into a 1,4-diazabicyclo[3.2.1]octane spiro-fused to a 2,5-cyclohexadienone. The dienone portion is further reduced to cyclohexanone by the flavin-dependent reductase FrzD. The methyltranserases (MTs) FrzE and FrzF are then involved in the methylation at the C10' amine and the C4 phenolic oxygen, respectively. The order of the two MTs appear to be interchangeable. Cleavage of the C9-N10' bond by the dioxygenase FrzG then leads to formation of a conjugated iminium. In addition to the oxidation of C9, an additional dehydrogenation between C7 and C8 can occur to give a likely shunt product. The next biosynthetic step is the intramolecular aldol condensation catalyzed by the newly identified aldolase FrzH to yield an aza-tricyclic product with the formation of a C9-C3' bond. The short-chain dehydrogenase/reductase FrzI then produces dephospho-(-)-FR901483 that is phosphorylated at C4'-OH into (-)-FR901483 by the phosphotransferase FrzJ. This is Short-chain dehydrogenase/reductase FrzI from Cladobotryum sp.